Reading from the N-terminus, the 366-residue chain is UDP-N-acetylglucosamine 2-epimerase (366 aa).

His-206 is an active-site residue.

Belongs to the UDP-N-acetylglucosamine 2-epimerase family. Homodimer.

Its subcellular location is the cytoplasm. The catalysed reaction is UDP-N-acetyl-alpha-D-glucosamine = UDP-N-acetyl-alpha-D-mannosamine. Its function is as follows. Catalyzes the reversible epimerization at C-2 of UDP-N-acetylglucosamine (UDP-GlcNAc) to produce UDP-N-acetylmannosamine (UDP-ManNAc), the activated donor of ManNAc residues. The sequence is that of UDP-N-acetylglucosamine 2-epimerase (wecB) from Methanococcus maripaludis (strain DSM 14266 / JCM 13030 / NBRC 101832 / S2 / LL).